The sequence spans 193 residues: MSTPPLAASGMAPGPFAGPQAQQAAREVNTASLCRIGQETVQDIVYRTMEIFQLLRNMQLPNGVTYHTGTYQDRLAKLQDHLRQLSILFRKLRLVYDKCNENCGGMDPIPVEQLIPYVEEDGSKDDRAGPPRFASEERREIAEVNKFQVNSKGTQPYLHMYPFSSKLPSHSGCRIPLSRIPCAVQNSNRRINS.

The segment at 1 to 20 (MSTPPLAASGMAPGPFAGPQ) is disordered. Position 2 is an N-acetylserine (serine 2). The segment covering 10 to 20 (GMAPGPFAGPQ) has biased composition (low complexity). The stretch at 71 to 93 (YQDRLAKLQDHLRQLSILFRKLR) forms a coiled coil.

Belongs to the Mediator complex subunit 30 family. Component of the Mediator complex, which is composed of MED1, MED4, MED6, MED7, MED8, MED9, MED10, MED11, MED12, MED13, MED13L, MED14, MED15, MED16, MED17, MED18, MED19, MED20, MED21, MED22, MED23, MED24, MED25, MED26, MED27, MED29, MED30, MED31, CCNC, CDK8 and CDC2L6/CDK11. The MED12, MED13, CCNC and CDK8 subunits form a distinct module termed the CDK8 module. Mediator containing the CDK8 module is less active than Mediator lacking this module in supporting transcriptional activation. Individual preparations of the Mediator complex lacking one or more distinct subunits have been variously termed ARC, CRSP, DRIP, PC2, SMCC and TRAP.

The protein localises to the nucleus. Its function is as follows. Component of the Mediator complex, a coactivator involved in the regulated transcription of nearly all RNA polymerase II-dependent genes. Mediator functions as a bridge to convey information from gene-specific regulatory proteins to the basal RNA polymerase II transcription machinery. Mediator is recruited to promoters by direct interactions with regulatory proteins and serves as a scaffold for the assembly of a functional preinitiation complex with RNA polymerase II and the general transcription factors. This Bos taurus (Bovine) protein is Mediator of RNA polymerase II transcription subunit 30 (MED30).